Consider the following 751-residue polypeptide: Photosystem I P700 chlorophyll a apoprotein A1 (751 aa).

Transmembrane regions (helical) follow at residues 72–95 (IFSA…FHGA), 158–181 (LYCT…FHYH), 197–221 (MNHH…HVSL), 293–311 (TAHH…GHMY), 348–371 (WHAQ…HHMY), 387–413 (LSLF…IFMV), 435–457 (AIIS…LYVH), and 532–550 (FLVH…LILL). The [4Fe-4S] cluster site is built by C574 and C583. The next 2 membrane-spanning stretches (helical) occupy residues 590 to 611 (HVFL…HFSW) and 665 to 687 (LSAY…MFLF). H676 serves as a coordination point for chlorophyll a'. Residues M684 and Y692 each contribute to the chlorophyll a site. W693 lines the phylloquinone pocket. A helical membrane pass occupies residues 725-745 (AVGVTHYLLGGIVTTWAFFLA).

It belongs to the PsaA/PsaB family. As to quaternary structure, the PsaA/B heterodimer binds the P700 chlorophyll special pair and subsequent electron acceptors. PSI consists of a core antenna complex that captures photons, and an electron transfer chain that converts photonic excitation into a charge separation. The cyanobacterial PSI reaction center is composed of one copy each of PsaA,B,C,D,E,F,I,J,K,L,M and X, and forms trimeric complexes. The cofactor is PSI electron transfer chain: 5 chlorophyll a, 1 chlorophyll a', 2 phylloquinones and 3 4Fe-4S clusters. PSI core antenna: 90 chlorophyll a, 22 carotenoids, 3 phospholipids and 1 galactolipid. P700 is a chlorophyll a/chlorophyll a' dimer, A0 is one or more chlorophyll a, A1 is one or both phylloquinones and FX is a shared 4Fe-4S iron-sulfur center..

It is found in the cellular thylakoid membrane. It catalyses the reaction reduced [plastocyanin] + hnu + oxidized [2Fe-2S]-[ferredoxin] = oxidized [plastocyanin] + reduced [2Fe-2S]-[ferredoxin]. Its function is as follows. PsaA and PsaB bind P700, the primary electron donor of photosystem I (PSI), as well as the electron acceptors A0, A1 and FX. PSI is a plastocyanin/cytochrome c6-ferredoxin oxidoreductase, converting photonic excitation into a charge separation, which transfers an electron from the donor P700 chlorophyll pair to the spectroscopically characterized acceptors A0, A1, FX, FA and FB in turn. Oxidized P700 is reduced on the lumenal side of the thylakoid membrane by plastocyanin or cytochrome c6. The sequence is that of Photosystem I P700 chlorophyll a apoprotein A1 from Gloeothece citriformis (strain PCC 7424) (Cyanothece sp. (strain PCC 7424)).